A 395-amino-acid polypeptide reads, in one-letter code: Elongation factor Tu (395 aa).

Residues 10–204 enclose the tr-type G domain; sequence KPHVNVGTIG…AVDAYIDTPL (195 aa). Residues 19-26 form a G1 region; that stretch reads GHVDHGKT. A GTP-binding site is contributed by 19 to 26; the sequence is GHVDHGKT. Residue T26 participates in Mg(2+) binding. Residues 60 to 64 are G2; that stretch reads GITIN. Positions 81–84 are G3; it reads DCPG. GTP is bound by residues 81-85 and 136-139; these read DCPGH and NKAD. A G4 region spans residues 136–139; that stretch reads NKAD. Residues 174-176 are G5; the sequence is SAL.

The protein belongs to the TRAFAC class translation factor GTPase superfamily. Classic translation factor GTPase family. EF-Tu/EF-1A subfamily. Monomer.

The protein resides in the cytoplasm. The catalysed reaction is GTP + H2O = GDP + phosphate + H(+). Functionally, GTP hydrolase that promotes the GTP-dependent binding of aminoacyl-tRNA to the A-site of ribosomes during protein biosynthesis. This is Elongation factor Tu from Acholeplasma laidlawii (strain PG-8A).